The primary structure comprises 900 residues: Aldos-2-ulose dehydratase (900 aa).

The interval 1 to 433 (MYSKVFLKPH…NPSINVFLST (433 aa)) is dehydratase domain. Tyr-35 is an ascopyrone M binding site. Mg(2+) is bound by residues Asp-101, Thr-103, Asn-105, Phe-107, and Asp-109. Tyr-116, Met-120, His-155, His-215, His-295, and His-337 together coordinate ascopyrone M. The active-site Proton acceptor is the His-155. Zn(2+) contacts are provided by His-215, His-295, His-337, Asp-343, Asp-345, Asp-347, Glu-349, and Glu-351. Positions 414, 419, and 627 each coordinate ascopyrone M. Positions 434-739 (GILAERLDEE…EFPGFETFST (306 aa)) are isomerase domain. Positions 627 and 630 each coordinate 1,5-anhydro-D-fructose. Zn(2+)-binding residues include His-630, His-632, and Glu-639. 2 residues coordinate ascopyrone M: Glu-639 and His-641. A 1,5-anhydro-D-fructose-binding site is contributed by His-641. A Zn(2+)-binding site is contributed by His-709. Trp-726 contributes to the ascopyrone M binding site. Trp-726 is a binding site for 1,5-anhydro-D-fructose.

Homodimer. Requires Zn(2+) as cofactor.

It catalyses the reaction 1,5-anhydro-D-fructose = microthecin + H2O. The enzyme catalyses 1,5-anhydro-D-fructose = ascopyrone M + H2O. It carries out the reaction ascopyrone M = microthecin. The catalysed reaction is 2-dehydro-D-glucose = cortalcerone + H2O. The protein operates within carbohydrate metabolism; 1,5-anhydro-D-fructose degradation. Its function is as follows. A bifunctional enzyme which catalyzes the dehydration of anhydrofructose into ascopyrone M, and the isomerization of ascopyrone M into microthecin. To a lesser extent, can also act on 2-dehydro-D-glucopyranose (D-glucosone), leading to the antibiotic cortalcerone. The chain is Aldos-2-ulose dehydratase from Phanerodontia chrysosporium (White-rot fungus).